The following is a 420-amino-acid chain: UDP-N-acetylglucosamine 1-carboxyvinyltransferase (420 aa).

A phosphoenolpyruvate-binding site is contributed by 22–23 (KN). Residue R94 participates in UDP-N-acetyl-alpha-D-glucosamine binding. C118 serves as the catalytic Proton donor. A 2-(S-cysteinyl)pyruvic acid O-phosphothioketal modification is found at C118. D307 and I329 together coordinate UDP-N-acetyl-alpha-D-glucosamine.

Belongs to the EPSP synthase family. MurA subfamily.

It is found in the cytoplasm. It carries out the reaction phosphoenolpyruvate + UDP-N-acetyl-alpha-D-glucosamine = UDP-N-acetyl-3-O-(1-carboxyvinyl)-alpha-D-glucosamine + phosphate. Its pathway is cell wall biogenesis; peptidoglycan biosynthesis. In terms of biological role, cell wall formation. Adds enolpyruvyl to UDP-N-acetylglucosamine. In Granulibacter bethesdensis (strain ATCC BAA-1260 / CGDNIH1), this protein is UDP-N-acetylglucosamine 1-carboxyvinyltransferase.